The following is a 350-amino-acid chain: Serpentine receptor class beta-12 (350 aa).

The Extracellular portion of the chain corresponds to 1-21 (MSEANLTECELAYQLTYHPFY). Residue Asn5 is glycosylated (N-linked (GlcNAc...) asparagine). The helical transmembrane segment at 22–42 (MIAQFWSFFVSLLAMPSLIFF) threads the bilayer. Over 43–57 (MVEKVFKLPFHGNLK) the chain is Cytoplasmic. Residues 58–78 (FLLVSYFIGTFLFASIICFTF) traverse the membrane as a helical segment. Topologically, residues 79–103 (GYHFFVPFFVTSNCDLIINATLFKY) are extracellular. A glycan (N-linked (GlcNAc...) asparagine) is linked at Asn97. A helical membrane pass occupies residues 104 to 124 (GHMIALIFMTIPMILPTAFTV). Topologically, residues 125 to 141 (ERFVALKMAHSYEHVRT) are cytoplasmic. The helical transmembrane segment at 142 to 162 (LLGPVLVLVVIAIDSMFLYDI) threads the bilayer. Residues 163–189 (YGQEKFDKPFINFILVPATSALQFNSF) lie on the Extracellular side of the membrane. The chain crosses the membrane as a helical span at residues 190-210 (LWYMLYLKITNFICNLILLFI). Residues 211–243 (HKILHQSSRYRRKNVSLSVKYEMQEISQSSRFT) are Cytoplasmic-facing. The chain crosses the membrane as a helical span at residues 244–264 (LIVTFTHLLFFGWYVSTILLI). At 265-282 (RTVGPDFFRGFINYTVMR) the chain is on the extracellular side. Residue Asn277 is glycosylated (N-linked (GlcNAc...) asparagine). The chain crosses the membrane as a helical span at residues 283-303 (GVYCATPTYNLVIVFIGFKAL). Residues 304–350 (NHLNFKRNNKVQSTIQIKSTGQEGAENYDNAISNYWDSVYTMNKSKL) lie on the Cytoplasmic side of the membrane.

The protein belongs to the nematode receptor-like protein srb family. Expressed throughout the head.

The protein localises to the cell membrane. It localises to the perikaryon. The protein resides in the cell projection. Its subcellular location is the dendrite. Functionally, G-protein coupled receptor. Plays a role in the navigational capacity of sperm and promotes the targeting of sperm derived from males to the fertilization site in the uterus of hermaphrodites. The polypeptide is Serpentine receptor class beta-12 (Caenorhabditis elegans).